Here is a 399-residue protein sequence, read N- to C-terminus: Elongation factor Tu 1 (399 aa).

The tr-type G domain maps to 10 to 209 (KPHVNIGTIG…QVDTYIPEPE (200 aa)). Residues 19-26 (GHVDHGKT) are G1. 19 to 26 (GHVDHGKT) provides a ligand contact to GTP. Thr26 is a binding site for Mg(2+). Residues 60 to 64 (GITIA) form a G2 region. The interval 81–84 (DCPG) is G3. GTP is bound by residues 81-85 (DCPGH) and 136-139 (NKAD). A G4 region spans residues 136–139 (NKAD). The segment at 174 to 176 (SAL) is G5.

It belongs to the TRAFAC class translation factor GTPase superfamily. Classic translation factor GTPase family. EF-Tu/EF-1A subfamily. In terms of assembly, monomer.

The protein resides in the cytoplasm. It catalyses the reaction GTP + H2O = GDP + phosphate + H(+). GTP hydrolase that promotes the GTP-dependent binding of aminoacyl-tRNA to the A-site of ribosomes during protein biosynthesis. This chain is Elongation factor Tu 1, found in Syntrophotalea carbinolica (strain DSM 2380 / NBRC 103641 / GraBd1) (Pelobacter carbinolicus).